The following is a 516-amino-acid chain: Thiosulfate sulfurtransferase/rhodanese-like domain-containing protein 2 (516 aa).

A Phosphoserine modification is found at S269. The region spanning 301–396 is the Rhodanese domain; it reads EQSDTILLDC…YLEEFPDGFY (96 aa). The active-site Cysteine persulfide intermediate is the C355. The segment at 490-516 is disordered; sequence RELLQHVRQPVSPEPGPDAEEDGPVLV. Residues 506–516 are compositionally biased toward acidic residues; that stretch reads PDAEEDGPVLV.

This is Thiosulfate sulfurtransferase/rhodanese-like domain-containing protein 2 (TSTD2) from Pongo abelii (Sumatran orangutan).